A 414-amino-acid chain; its full sequence is Serine/threonine transporter SstT (414 aa).

The next 8 membrane-spanning stretches (helical) occupy residues 22 to 42 (GLVL…TIGF), 54 to 74 (IFVK…VMAA), 89 to 109 (IIVL…IAGF), 148 to 168 (AIFK…GLAL), 189 to 209 (IVHV…AETL), 223 to 243 (LLAV…PILV), 305 to 325 (MAGA…TLGL), and 337 to 357 (IVAA…LLLI).

The protein belongs to the dicarboxylate/amino acid:cation symporter (DAACS) (TC 2.A.23) family.

The protein resides in the cell inner membrane. It catalyses the reaction L-serine(in) + Na(+)(in) = L-serine(out) + Na(+)(out). The enzyme catalyses L-threonine(in) + Na(+)(in) = L-threonine(out) + Na(+)(out). Its function is as follows. Involved in the import of serine and threonine into the cell, with the concomitant import of sodium (symport system). The sequence is that of Serine/threonine transporter SstT from Haemophilus influenzae (strain PittGG).